The primary structure comprises 154 residues: Myoglobin (154 aa).

The region spanning 2 to 148 (GLSDQEWQQV…FRNDMASKYK (147 aa)) is the Globin domain. H65 is a binding site for nitrite. Position 65 (H65) interacts with O2. Residue H94 coordinates heme b.

Monomeric.

Its subcellular location is the cytoplasm. The protein resides in the sarcoplasm. The catalysed reaction is Fe(III)-heme b-[protein] + nitric oxide + H2O = Fe(II)-heme b-[protein] + nitrite + 2 H(+). The enzyme catalyses H2O2 + AH2 = A + 2 H2O. In terms of biological role, monomeric heme protein which primary function is to store oxygen and facilitate its diffusion within muscle tissues. Reversibly binds oxygen through a pentacoordinated heme iron and enables its timely and efficient release as needed during periods of heightened demand. Depending on the oxidative conditions of tissues and cells, and in addition to its ability to bind oxygen, it also has a nitrite reductase activity whereby it regulates the production of bioactive nitric oxide. Under stress conditions, like hypoxia and anoxia, it also protects cells against reactive oxygen species thanks to its pseudoperoxidase activity. The polypeptide is Myoglobin (MB) (Struthio camelus (Common ostrich)).